Reading from the N-terminus, the 585-residue chain is Pentatricopeptide repeat-containing protein At4g21170 (585 aa).

PPR repeat units follow at residues 152-186 (LSVSLSLVLEYYALKGSHHNGLEVFGFMRRLRLSP), 187-221 (SQSAYNSLLGSLVKENQFRVALCLYSAMVRNGIVS), 222-247 (DELTWDLIAQILCEQGRSKSVFKLME), 252-286 (SCKIYTNLVECYSRNGEFDAVFSLIHEMDDKKLEL), 287-321 (SFCSYGCVLDDACRLGDAEFIDKVLCLMVEKKFVT), 324-358 (DSAVNDKIIERLCDMGKTFASEMLFRKACNGETVR), 360-394 (WDSTYGCMLKALSRKKRTKEAVDVYRMICRKGITV), 396-431 (DESCYIEFANALCRDDNSSEEEEELLVDVIKRGFVP), 432-466 (CTHKLSEVLASMCRKRRWKSAEKLLDSVMEMEVYF), 467-501 (DSFACGLLMERYCRSGKLEKALVLHEKIKKMKGSL), 502-534 (DVNAYNAVLDRLMMRQKEMVEEAVVVFEYMKEI), and 538-572 (NSKSFTIMIQGLCRVKEMKKAMRSHDEMLRLGLKP).

This sequence belongs to the PPR family. P subfamily.

The polypeptide is Pentatricopeptide repeat-containing protein At4g21170 (Arabidopsis thaliana (Mouse-ear cress)).